A 174-amino-acid polypeptide reads, in one-letter code: Amino-acid acetyltransferase (174 aa).

Positions P10 to D148 constitute an N-acetyltransferase domain.

This sequence belongs to the acetyltransferase family. In terms of assembly, homodimer and homotetramer.

The enzyme catalyses L-glutamate + acetyl-CoA = N-acetyl-L-glutamate + CoA + H(+). It participates in amino-acid biosynthesis; L-arginine biosynthesis; N(2)-acetyl-L-ornithine from L-glutamate: step 1/4. Its activity is regulated as follows. Inhibited by L-arginine. Catalyzes the conversion of L-glutamate to alpha-N-acetyl-L-glutamate. L-glutamine is a significantly better substrate compared to L-glutamate. The polypeptide is Amino-acid acetyltransferase (argA) (Mycobacterium tuberculosis (strain ATCC 25618 / H37Rv)).